We begin with the raw amino-acid sequence, 43 residues long: MEPATVLSIALAAVCIGVTGYSIYLSFGPPSKELADPFDDHED.

Residues 7-29 traverse the membrane as a helical segment; the sequence is LSIALAAVCIGVTGYSIYLSFGP.

The protein belongs to the PsbN family.

It is found in the cellular thylakoid membrane. In terms of biological role, may play a role in photosystem I and II biogenesis. The sequence is that of Protein PsbN from Thermosynechococcus vestitus (strain NIES-2133 / IAM M-273 / BP-1).